The primary structure comprises 388 residues: Phosphoglycerate kinase (388 aa).

Residues 21-23 (DLN), Arg36, 59-62 (HLGR), Arg114, and Arg147 each bind substrate. Residues Lys198, Glu315, and 341–344 (GGDT) each bind ATP.

The protein belongs to the phosphoglycerate kinase family. As to quaternary structure, monomer.

It localises to the cytoplasm. It catalyses the reaction (2R)-3-phosphoglycerate + ATP = (2R)-3-phospho-glyceroyl phosphate + ADP. It participates in carbohydrate degradation; glycolysis; pyruvate from D-glyceraldehyde 3-phosphate: step 2/5. The sequence is that of Phosphoglycerate kinase from Buchnera aphidicola subsp. Schizaphis graminum (strain Sg).